The sequence spans 461 residues: Cysteine--tRNA ligase (461 aa).

Cys28 serves as a coordination point for Zn(2+). A 'HIGH' region motif is present at residues 30–40; it reads ITIYDLCHIGH. Positions 209, 234, and 238 each coordinate Zn(2+). The 'KMSKS' region motif lies at 266-270; it reads KMSKS. Residue Lys269 coordinates ATP.

Belongs to the class-I aminoacyl-tRNA synthetase family. Monomer. Requires Zn(2+) as cofactor.

Its subcellular location is the cytoplasm. It carries out the reaction tRNA(Cys) + L-cysteine + ATP = L-cysteinyl-tRNA(Cys) + AMP + diphosphate. This Yersinia pseudotuberculosis serotype O:3 (strain YPIII) protein is Cysteine--tRNA ligase.